Consider the following 279-residue polypeptide: Shikimate dehydrogenase (NADP(+)) (279 aa).

Residues 16–18 (SRS) and Thr63 contribute to the shikimate site. Catalysis depends on Lys67, which acts as the Proton acceptor. Asn88 and Asp103 together coordinate shikimate. Residues 128-132 (GAGGA) and Met219 each bind NADP(+). Tyr221 serves as a coordination point for shikimate. Gly243 serves as a coordination point for NADP(+).

Belongs to the shikimate dehydrogenase family. As to quaternary structure, homodimer.

The enzyme catalyses shikimate + NADP(+) = 3-dehydroshikimate + NADPH + H(+). Its pathway is metabolic intermediate biosynthesis; chorismate biosynthesis; chorismate from D-erythrose 4-phosphate and phosphoenolpyruvate: step 4/7. Involved in the biosynthesis of the chorismate, which leads to the biosynthesis of aromatic amino acids. Catalyzes the reversible NADPH linked reduction of 3-dehydroshikimate (DHSA) to yield shikimate (SA). The protein is Shikimate dehydrogenase (NADP(+)) of Aromatoleum aromaticum (strain DSM 19018 / LMG 30748 / EbN1) (Azoarcus sp. (strain EbN1)).